Consider the following 396-residue polypeptide: Argininosuccinate synthase (396 aa).

ATP contacts are provided by residues 10 to 18 (AYSGGLDTS) and Ala-37. L-citrulline-binding residues include Tyr-88 and Ser-93. Gly-118 contributes to the ATP binding site. Positions 120, 124, and 125 each coordinate L-aspartate. Asn-124 contacts L-citrulline. Positions 128, 176, 185, 261, and 273 each coordinate L-citrulline.

The protein belongs to the argininosuccinate synthase family. Type 1 subfamily. As to quaternary structure, homotetramer.

It is found in the cytoplasm. The enzyme catalyses L-citrulline + L-aspartate + ATP = 2-(N(omega)-L-arginino)succinate + AMP + diphosphate + H(+). It participates in amino-acid biosynthesis; L-arginine biosynthesis; L-arginine from L-ornithine and carbamoyl phosphate: step 2/3. In Nitratidesulfovibrio vulgaris (strain DP4) (Desulfovibrio vulgaris), this protein is Argininosuccinate synthase.